Here is a 369-residue protein sequence, read N- to C-terminus: Anhydro-N-acetylmuramic acid kinase (369 aa).

12 to 19 contacts ATP; it reads GTSLDGVD.

Belongs to the anhydro-N-acetylmuramic acid kinase family.

The enzyme catalyses 1,6-anhydro-N-acetyl-beta-muramate + ATP + H2O = N-acetyl-D-muramate 6-phosphate + ADP + H(+). The protein operates within amino-sugar metabolism; 1,6-anhydro-N-acetylmuramate degradation. It functions in the pathway cell wall biogenesis; peptidoglycan recycling. Its function is as follows. Catalyzes the specific phosphorylation of 1,6-anhydro-N-acetylmuramic acid (anhMurNAc) with the simultaneous cleavage of the 1,6-anhydro ring, generating MurNAc-6-P. Is required for the utilization of anhMurNAc either imported from the medium or derived from its own cell wall murein, and thus plays a role in cell wall recycling. The polypeptide is Anhydro-N-acetylmuramic acid kinase (Actinobacillus pleuropneumoniae serotype 5b (strain L20)).